An 850-amino-acid chain; its full sequence is Pentatricopeptide repeat-containing protein At3g49170, chloroplastic (850 aa).

Residues 1–50 (MAMISFSFPSPAKLPIKSQPSVSNRINVADRLILRHLNAGDLRGAVSALD) constitute a chloroplast transit peptide. PPR repeat units follow at residues 61-95 (DSVTFSSLLKSCIRARDFRLGKLVHARLIEFDIEP), 96-130 (DSVLYNSLISLYSKSGDSAKAEDVFETMRRFGKRD), 131-164 (VVSWSAMMACYGNNGRELDAIKVFVEFLELGLVP), 165-199 (NDYCYTAVIRACSNSDFVGVGRVTLGFLMKTGHFE), 201-232 (DVCVGCSLIDMFVKGENSFENAYKVFDKMSEL), 233-267 (NVVTWTLMITRCMQMGFPREAIRFFLDMVLSGFES), 268-302 (DKFTLSSVFSACAELENLSLGKQLHSWAIRSGLVD), 303-334 (DVECSLVDMYAKCSADGSVDDCRKVFDRMEDH), 335-370 (SVMSWTALITGYMKNCNLATEAINLFSEMITQGHVE), 372-406 (NHFTFSSAFKACGNLSDPRVGKQVLGQAFKRGLAS), 407-437 (NSSVANSVISMFVKSDRMEDAQRAFESLSEK), 438-472 (NLVSYNTFLDGTCRNLNFEQAFKLLSEITERELGV), 473-507 (SAFTFASLLSGVANVGSIRKGEQIHSQVVKLGLSC), 508-538 (NQPVCNALISMYSKCGSIDTASRVFNFMENR), 539-573 (NVISWTSMITGFAKHGFAIRVLETFNQMIEEGVKP), 574-609 (NEVTYVAILSACSHVGLVSEGWRHFNSMYEDHKIKP), and 610-640 (KMEHYACMVDLLCRAGLLTDAFEFINTMPFQ). The interval 645–720 (VWRTFLGACR…EGGCSWIEVG (76 aa)) is type E motif. The type E(+) motif stretch occupies residues 721–751 (DKIHKFYVGDTAHPNAHQIYDELDRLITEIK). Residues 752 to 850 (RCGYVPDTDL…DGKCSCNDYW (99 aa)) form a type DYW motif region.

The protein belongs to the PPR family. PCMP-H subfamily.

It is found in the plastid. It localises to the chloroplast. In terms of biological role, may play a role in embryogenesis. The sequence is that of Pentatricopeptide repeat-containing protein At3g49170, chloroplastic (EMB2261) from Arabidopsis thaliana (Mouse-ear cress).